The following is a 403-amino-acid chain: MGIRAFLDKIEHNFEKGGKYEKWYALYEAIDTFFYRPGSVTKTTAHVRDGIDLKRMMITVWLCTFPAMFFGMWNTGYQANLIFAQSPELLASQEGWRFALIGSLAGFDPNSLWDNFIQGAAYFLPVYAVTFIVGGFWEVLFASIRKHEVNEGFFVTSVLFALILPPSIPLWQVALGISFGVVIGKEVFGGTGKNFLNPALTGRAFLFFAYPAQMSGDAVWTAVDGFAGATSLSLAASGGIENVINNGITWMDAFIGTIHGSLGETSTLAIAIGGLVLLITKIASWRIVSGVMLGMIGLSLLLNLIGSNTNPMFAMPWYWHLVVGGFAFGMFFMATDPVSASMTNTGKWIFGALIGVMVVLIRVVNPAFPEGMMLAILFANLFAPLIDHFVVQANIKRRLARNV.

Helical transmembrane passes span 56–76, 121–141, 163–183, 220–240, 265–285, 287–307, 312–332, 348–368, and 371–391; these read MMIT…WNTG, AYFL…EVLF, ILPP…GVVI, WTAV…SGGI, TSTL…IASW, IVSG…LIGS, MFAM…GMFF, WIFG…NPAF, and GMML…HFVV. Thr-230 is subject to FMN phosphoryl threonine.

It belongs to the NqrB/RnfD family. Composed of six subunits; NqrA, NqrB, NqrC, NqrD, NqrE and NqrF. Requires FMN as cofactor.

It localises to the cell inner membrane. It catalyses the reaction a ubiquinone + n Na(+)(in) + NADH + H(+) = a ubiquinol + n Na(+)(out) + NAD(+). Its function is as follows. NQR complex catalyzes the reduction of ubiquinone-1 to ubiquinol by two successive reactions, coupled with the transport of Na(+) ions from the cytoplasm to the periplasm. NqrA to NqrE are probably involved in the second step, the conversion of ubisemiquinone to ubiquinol. This is Na(+)-translocating NADH-quinone reductase subunit B from Ectopseudomonas mendocina (strain ymp) (Pseudomonas mendocina).